Reading from the N-terminus, the 450-residue chain is tRNA modification GTPase MnmE (450 aa).

(6S)-5-formyl-5,6,7,8-tetrahydrofolate contacts are provided by R23, E79, and K118. The TrmE-type G domain occupies 214 to 374 (GITLILVGKP…LKEHILNKVG (161 aa)). N224 is a K(+) binding site. GTP is bound by residues 224–229 (NAGKSS), 243–249 (TSIAGTT), and 268–271 (DTAG). A Mg(2+)-binding site is contributed by S228. The K(+) site is built by T243, I245, and T248. Residue T249 participates in Mg(2+) binding. K450 provides a ligand contact to (6S)-5-formyl-5,6,7,8-tetrahydrofolate.

It belongs to the TRAFAC class TrmE-Era-EngA-EngB-Septin-like GTPase superfamily. TrmE GTPase family. As to quaternary structure, homodimer. Heterotetramer of two MnmE and two MnmG subunits. The cofactor is K(+).

The protein resides in the cytoplasm. In terms of biological role, exhibits a very high intrinsic GTPase hydrolysis rate. Involved in the addition of a carboxymethylaminomethyl (cmnm) group at the wobble position (U34) of certain tRNAs, forming tRNA-cmnm(5)s(2)U34. This is tRNA modification GTPase MnmE from Francisella tularensis subsp. holarctica (strain FTNF002-00 / FTA).